Here is a 1560-residue protein sequence, read N- to C-terminus: BRD4-interacting chromatin-remodeling complex-associated protein (1560 aa).

6 disordered regions span residues 53–99 (VQEA…GADQ), 624–688 (APQA…ATPT), 723–949 (IVSA…VTTP), 974–1028 (NKAG…TGLP), 1049–1075 (KAAS…KPPT), and 1215–1300 (SSEG…IKTY). Gly residues predominate over residues 86–96 (ATGGGGGGSGG). Residues 624 to 664 (APQAPPAVSTPLPLGLQQPQAQQPPQAPTPQAAAPPQATTP) are compositionally biased toward low complexity. The span at 726-736 (APPPAQDPAPA) shows a compositional bias: pro residues. Low complexity predominate over residues 747-780 (PQAPDSQASPAPAPQIPAAAPLKGPGPSSSPSLP). Pro residues-rich tracts occupy residues 791 to 806 (LPSP…PPSR), 814 to 831 (PSEP…PPTL), and 843 to 880 (VPPP…PHLP). Residues 881–896 (PSSTSSAVASSSETSS) show a composition bias toward low complexity. Serine 919 bears the Phosphoserine mark. Threonine 921 bears the Phosphothreonine mark. The span at 932-941 (PAAPPPPPPR) shows a compositional bias: pro residues. A compositionally biased stretch (low complexity) spans 1005–1028 (APSGTPTAPSHAPAPAPMAATGLP). Position 1057 is an N6-acetyllysine (lysine 1057). Residues 1227-1236 (LSSSAPGAST) are compositionally biased toward polar residues. Low complexity predominate over residues 1264 to 1281 (ASSSLSSSSSSSSAASSL). Lysine 1313 is covalently cross-linked (Glycyl lysine isopeptide (Lys-Gly) (interchain with G-Cter in SUMO2)). 2 disordered regions span residues 1324-1424 (NTAL…VDEA) and 1440-1560 (YQRM…TLTR). The span at 1331–1356 (HQPPPPPATLKVAEPPPRPPPPPPPT) shows a compositional bias: pro residues. Residues 1401–1412 (PEGTPAGRARGG) show a composition bias toward low complexity. The residue at position 1413 (serine 1413) is a Phosphoserine. Positions 1485–1515 (ASFSSDSPQDDTLTEHLQSAIDSILNLQQAP) are enriched in polar residues.

Component of the multiprotein chromatin-remodeling complexes SWI/SNF: SWI/SNF-A (BAF), SWI/SNF-B (PBAF) and related complexes. The canonical complex contains a catalytic subunit (either SMARCA4/BRG1/BAF190A or SMARCA2/BRM/BAF190B) and at least SMARCE1, ACTL6A/BAF53, SMARCC1/BAF155, SMARCC2/BAF170, and SMARCB1/SNF5/BAF47. Other subunits specific to each of the complexes may also be present permitting several possible combinations developmentally and tissue specific. Component of the SWI/SNF (GBAF) subcomplex, which includes at least BICRA or BICRAL (mutually exclusive), BRD9, SS18, the core BAF subunits, SMARCA2/BRM, SMARCA4/BRG1/BAF190A, ACTL6A/BAF53, SMARCC1/BAF155, and SMARCD1/BAF60A. Interacts with BRD4; the interaction bridges BRD4 to the GBAF complex. Expressed at moderate levels in heart, brain, placenta, skeletal muscle, and pancreas, and at lower levels in lung, liver and kidney.

The protein resides in the nucleus. Functionally, component of SWI/SNF chromatin remodeling subcomplex GBAF that carries out key enzymatic activities, changing chromatin structure by altering DNA-histone contacts within a nucleosome in an ATP-dependent manner. May play a role in BRD4-mediated gene transcription. The polypeptide is BRD4-interacting chromatin-remodeling complex-associated protein (Homo sapiens (Human)).